The sequence spans 117 residues: Large ribosomal subunit protein uL24 (117 aa).

It belongs to the universal ribosomal protein uL24 family. As to quaternary structure, part of the 50S ribosomal subunit.

Functionally, one of two assembly initiator proteins, it binds directly to the 5'-end of the 23S rRNA, where it nucleates assembly of the 50S subunit. In terms of biological role, located at the polypeptide exit tunnel on the outside of the subunit. This Methanothermobacter thermautotrophicus (strain ATCC 29096 / DSM 1053 / JCM 10044 / NBRC 100330 / Delta H) (Methanobacterium thermoautotrophicum) protein is Large ribosomal subunit protein uL24.